A 106-amino-acid polypeptide reads, in one-letter code: uncharacterized protein (106 aa).

The protein belongs to the HesB/IscA family.

This is an uncharacterized protein from Cereibacter sphaeroides (Rhodobacter sphaeroides).